Consider the following 439-residue polypeptide: MFFKTLKEAFKVKDVRARILFTIFILFVFRLGAHITAPGVNVQNLQQVADLPFLSMMNLVSGNAMQNYSLFAMGVSPYITASIIVQLLQMDILPKFVEWSKQGEIGRRKLNQATRYITLVLAMAQSIGITAGFQAMSSLNIVQNPNWQSYLMIGVLLTTGSMVVTWMGEQINEKGFGSGVSVIIFAGIVSGIPSAIKSVYDEKFLNVRPSEIPMSWIFVIGLILSAIVIIYVTTFVQQAERKVPIQYTKLTQGAPTSSYLPLRVNPAGVIPVIFAGSITTAPATILQFLQRSQGSNVGWLSTLQNALSYTTWTGMLFYALLIVLFTFFYSFVQVNPEKMAENLQKQGSYIPSVRPGKGTEKYVSRLLMRLATVGSLFLGLISIIPIAAQNVWGLPKIVALGGTSLLILIQVAIQAVKQLEGYLLKRKYAGFMDNPLETK.

The next 10 helical transmembrane spans lie at 19 to 39 (ILFTIFILFVFRLGAHITAPG), 68 to 88 (YSLFAMGVSPYITASIIVQLL), 116 to 136 (YITLVLAMAQSIGITAGFQAM), 151 to 171 (LMIGVLLTTGSMVVTWMGEQI), 176 to 196 (FGSGVSVIIFAGIVSGIPSAI), 216 to 236 (WIFVIGLILSAIVIIYVTTFV), 269 to 289 (VIPVIFAGSITTAPATILQFL), 312 to 332 (WTGMLFYALLIVLFTFFYSFV), 373 to 393 (VGSLFLGLISIIPIAAQNVWG), and 396 to 416 (KIVALGGTSLLILIQVAIQAV).

It belongs to the SecY/SEC61-alpha family. Component of the Sec protein translocase complex. Heterotrimer consisting of SecY, SecE and SecG subunits. The heterotrimers can form oligomers, although 1 heterotrimer is thought to be able to translocate proteins. Interacts with the ribosome. Interacts with SecDF, and other proteins may be involved. Interacts with SecA.

Its subcellular location is the cell membrane. Functionally, the central subunit of the protein translocation channel SecYEG. Consists of two halves formed by TMs 1-5 and 6-10. These two domains form a lateral gate at the front which open onto the bilayer between TMs 2 and 7, and are clamped together by SecE at the back. The channel is closed by both a pore ring composed of hydrophobic SecY resides and a short helix (helix 2A) on the extracellular side of the membrane which forms a plug. The plug probably moves laterally to allow the channel to open. The ring and the pore may move independently. This chain is Protein translocase subunit SecY, found in Lactococcus lactis subsp. cremoris (Streptococcus cremoris).